A 483-amino-acid chain; its full sequence is UDP-N-acetylmuramate--L-alanine ligase (483 aa).

112–118 provides a ligand contact to ATP; sequence GTHGKTT.

It belongs to the MurCDEF family.

It is found in the cytoplasm. The enzyme catalyses UDP-N-acetyl-alpha-D-muramate + L-alanine + ATP = UDP-N-acetyl-alpha-D-muramoyl-L-alanine + ADP + phosphate + H(+). It functions in the pathway cell wall biogenesis; peptidoglycan biosynthesis. Cell wall formation. The protein is UDP-N-acetylmuramate--L-alanine ligase of Ralstonia nicotianae (strain ATCC BAA-1114 / GMI1000) (Ralstonia solanacearum).